The primary structure comprises 91 residues: Small ribosomal subunit protein bS16 (91 aa).

It belongs to the bacterial ribosomal protein bS16 family.

The sequence is that of Small ribosomal subunit protein bS16 from Latilactobacillus sakei subsp. sakei (strain 23K) (Lactobacillus sakei subsp. sakei).